The primary structure comprises 435 residues: 5-methylthioadenosine/S-adenosylhomocysteine deaminase (435 aa).

Zn(2+) is bound by residues His-65 and His-67. Substrate-binding residues include Glu-94, Arg-150, and His-189. Zn(2+) is bound at residue His-216. Substrate-binding residues include Glu-219 and Asp-304. A Zn(2+)-binding site is contributed by Asp-304.

Belongs to the metallo-dependent hydrolases superfamily. MTA/SAH deaminase family. It depends on Zn(2+) as a cofactor.

The enzyme catalyses S-adenosyl-L-homocysteine + H2O + H(+) = S-inosyl-L-homocysteine + NH4(+). It carries out the reaction S-methyl-5'-thioadenosine + H2O + H(+) = S-methyl-5'-thioinosine + NH4(+). In terms of biological role, catalyzes the deamination of 5-methylthioadenosine and S-adenosyl-L-homocysteine into 5-methylthioinosine and S-inosyl-L-homocysteine, respectively. Is also able to deaminate adenosine. This Bacillus cereus (strain ZK / E33L) protein is 5-methylthioadenosine/S-adenosylhomocysteine deaminase.